We begin with the raw amino-acid sequence, 269 residues long: Membrane protein insertase YidC 1 (269 aa).

A signal peptide spans 1 to 20 (MKKKFSLIAMAGAALLLLTA). Residue Cys21 is the site of N-palmitoyl cysteine attachment. Cys21 is lipidated: S-diacylglycerol cysteine. The next 4 membrane-spanning stretches (helical) occupy residues 45-65 (IRFL…TIVI), 124-144 (YMGC…YQAL), 165-185 (PTFI…YLMM), and 203-223 (PIFI…YWVI).

This sequence belongs to the OXA1/ALB3/YidC family. Type 2 subfamily.

It localises to the cell membrane. Its function is as follows. Required for the insertion and/or proper folding and/or complex formation of integral membrane proteins into the membrane. Involved in integration of membrane proteins that insert both dependently and independently of the Sec translocase complex, as well as at least some lipoproteins. In Lactococcus lactis subsp. lactis (strain IL1403) (Streptococcus lactis), this protein is Membrane protein insertase YidC 1.